The following is a 264-amino-acid chain: Taurine import ATP-binding protein TauB (264 aa).

The 230-residue stretch at 4–233 (LQLERISAQY…RYAAGESARA (230 aa)) folds into the ABC transporter domain. Residue 38–45 (GPSGSGKT) participates in ATP binding.

This sequence belongs to the ABC transporter superfamily. Taurine importer (TC 3.A.1.17.1) family. As to quaternary structure, the complex is composed of two ATP-binding proteins (TauB), two transmembrane proteins (TauC) and a solute-binding protein (TauA).

It is found in the cell inner membrane. It catalyses the reaction taurine(out) + ATP + H2O = taurine(in) + ADP + phosphate + H(+). Part of the ABC transporter complex TauABC involved in taurine import. Responsible for energy coupling to the transport system. This chain is Taurine import ATP-binding protein TauB, found in Pseudomonas fluorescens (strain Pf0-1).